Here is a 37-residue protein sequence, read N- to C-terminus: Cytochrome b6-f complex subunit 5 (37 aa).

Residues 5–25 form a helical membrane-spanning segment; that stretch reads LLCGIVLGLIPITLAGLFMAA.

This sequence belongs to the PetG family. In terms of assembly, the 4 large subunits of the cytochrome b6-f complex are cytochrome b6, subunit IV (17 kDa polypeptide, PetD), cytochrome f and the Rieske protein, while the 4 small subunits are PetG, PetL, PetM and PetN. The complex functions as a dimer.

It localises to the cellular thylakoid membrane. In terms of biological role, component of the cytochrome b6-f complex, which mediates electron transfer between photosystem II (PSII) and photosystem I (PSI), cyclic electron flow around PSI, and state transitions. PetG is required for either the stability or assembly of the cytochrome b6-f complex. This Synechococcus elongatus (strain ATCC 33912 / PCC 7942 / FACHB-805) (Anacystis nidulans R2) protein is Cytochrome b6-f complex subunit 5.